Consider the following 128-residue polypeptide: RYamide neuropeptides (128 aa).

The signal sequence occupies residues 1–23; sequence MHARKLIVVLVYILTVLVSVAVS. Residues 26-29 constitute a propeptide that is removed on maturation; the sequence is YTSE. Residue Tyr-44 is modified to Tyrosine amide. Positions 47–63 are excised as a propeptide; it reads GGPSPNNKENKVNIRPR. Tyrosine amide is present on Tyr-73. Residues 77–128 constitute a propeptide that is removed on maturation; that stretch reads SGWSPNASLVYPVSTPLCGLDEDLSCAYTGISDLYRCTPRKGESEEFTTSSN.

The protein resides in the secreted. In terms of biological role, neuropeptides RYamide-1 and RYamide-2 are ligands for the G-protein coupled receptor RYa-R. RYamide-2 is the most potent activator of RYa-R. The sequence is that of RYamide neuropeptides from Tribolium castaneum (Red flour beetle).